A 287-amino-acid polypeptide reads, in one-letter code: Cyclopropane mycolic acid synthase MmaA2 (287 aa).

S-adenosyl-L-methionine contacts are provided by residues 33–34 (YS), 72–74 (GCG), 94–99 (TLSKNQ), 123–124 (WE), and isoleucine 136. Residue cysteine 269 is part of the active site.

It belongs to the CFA/CMAS family.

The catalysed reaction is a 1-acyl-2-(9Z)-enoyl-sn-glycero-3-phospholipid + S-adenosyl-L-methionine = a 1-acyl-2-(9-cyclopronane)-acyl-sn-glycero-3-phospholipid + S-adenosyl-L-homocysteine + H(+). It functions in the pathway lipid metabolism; mycolic acid biosynthesis. Its function is as follows. Catalyzes the conversion of a double bond to a cis cyclopropane ring at the distal position of an alpha mycolic acid via the transfer of a methylene group from S-adenosyl-L-methionine. MmaA2 also catalyzes the biosynthesis of the cis-cyclopropanated methoxymycolates. Cyclopropanated mycolic acids are key factors participating in cell envelope permeability, host immunomodulation and persistence. The sequence is that of Cyclopropane mycolic acid synthase MmaA2 (mmaA2) from Mycobacterium tuberculosis (strain ATCC 25177 / H37Ra).